A 150-amino-acid chain; its full sequence is MSGTSASSQPRTLYQLCKEFGLTLRNLQISCIWCKKHLTGAEVLAYHFKDLVVVWRKDFPYAACAFCLEFNSKICALRHYERSAFWYTVEKETGLLLEEQQIRCALCQKPLSQSEKNHHIDTGTRFQFILCQWTGRCTHCRGQCVERRLP.

2 zinc fingers span residues 31–67 (CIWC…CAFC) and 104–140 (CALC…CTHC).

This sequence belongs to the papillomaviridae E6 protein family. Forms homodimers. Interacts with ubiquitin-protein ligase UBE3A/E6-AP; this interaction stimulates UBE3A ubiquitin activity. Interacts with host TP53 and EP300; this interaction inhibits TP53 activity.

The protein resides in the host cytoplasm. It localises to the host nucleus. In terms of biological role, plays a major role in the induction and maintenance of cellular transformation. E6 associates with host UBE3A/E6-AP ubiquitin-protein ligase and modulates its activity. Sequesters tumor suppressor TP53 in the host cytoplasm and modulates its activity by interacting with host EP300 that results in the reduction of TP53 acetylation and activation. In turn, apoptosis induced by DNA damage is inhibited. E6 also protects host keratinocytes from apoptosis by mediating the degradation of host BAK1. May also inhibit host immune response. This is Protein E6 from Homo sapiens (Human).